Reading from the N-terminus, the 479-residue chain is Ribosomal RNA small subunit methyltransferase F (479 aa).

Residues 125–131, Glu149, Asp176, and Asp194 contribute to the S-adenosyl-L-methionine site; that span reads AAAPGSK. The Nucleophile role is filled by Cys247.

It belongs to the class I-like SAM-binding methyltransferase superfamily. RsmB/NOP family.

The protein localises to the cytoplasm. It catalyses the reaction cytidine(1407) in 16S rRNA + S-adenosyl-L-methionine = 5-methylcytidine(1407) in 16S rRNA + S-adenosyl-L-homocysteine + H(+). Its function is as follows. Specifically methylates the cytosine at position 1407 (m5C1407) of 16S rRNA. The sequence is that of Ribosomal RNA small subunit methyltransferase F from Escherichia coli O81 (strain ED1a).